Consider the following 710-residue polypeptide: Tubulin polyglutamylase TTLL11 (710 aa).

Residues 41 to 135 are disordered; that stretch reads VRVDAGAAGE…QRPVTVDSSK (95 aa). Residues 51 to 60 show a composition bias toward basic and acidic residues; it reads PECKAGEEQP. Over residues 64-82 the composition is skewed to low complexity; the sequence is APAPAQPSAAEEGNTQVLQ. Over residues 83-93 the composition is skewed to pro residues; the sequence is RPPPTLPPSKP. Polar residues predominate over residues 123–135; it reads NGSQRPVTVDSSK. The 353-residue stretch at 128-480 folds into the TTL domain; sequence PVTVDSSKAR…EVKVAVIRDT (353 aa). ATP is bound by residues K249, 255-256, 282-285, and 295-297; these read QG, QEYI, and KFD. Q255 lines the a protein pocket. R321 contacts L-glutamate. 343-344 is a binding site for ATP; that stretch reads TN. Residues Y345, S346, and K365 each contribute to the L-glutamate site. Residues D428, E441, and N443 each coordinate Mg(2+). The segment at 467–538 is c-MTBD region; the sequence is LVDEEVKVAV…SICLKQVFPK (72 aa). L-glutamate is bound at residue K473. The tract at residues 665-710 is disordered; sequence GVPSGGRPPHRGPPQEPSPSAQPAGDNPPPRTSCANKLSHPRHTLS.

Belongs to the tubulin--tyrosine ligase family. Requires Mg(2+) as cofactor.

Its subcellular location is the cytoplasm. The protein localises to the cytoskeleton. It localises to the cilium basal body. It catalyses the reaction L-glutamyl-[protein] + L-glutamate + ATP = gamma-L-glutamyl-L-glutamyl-[protein] + ADP + phosphate + H(+). The enzyme catalyses (L-glutamyl)(n)-gamma-L-glutamyl-L-glutamyl-[protein] + L-glutamate + ATP = (L-glutamyl)(n+1)-gamma-L-glutamyl-L-glutamyl-[protein] + ADP + phosphate + H(+). In terms of biological role, polyglutamylase which modifies tubulin, generating polyglutamate side chains of variable lengths on the gamma-carboxyl group of specific glutamate residues within the C-terminal tail of tubulin. Preferentially mediates ATP-dependent polyglutamate long side-chain elongation over the initiation step of the polyglutamylation reaction. Preferentially modifies the alpha-tubulin tail over a beta-tail. Required for CCSAP localization to both spindle and cilia microtubules. Promotes tubulin polyglutamylation which stimulates spastin/SPAST-mediated microtubule severing, thereby regulating microtubule functions. The protein is Tubulin polyglutamylase TTLL11 of Homo sapiens (Human).